A 590-amino-acid polypeptide reads, in one-letter code: Aspartate--tRNA ligase (590 aa).

Residue E174 participates in L-aspartate binding. The tract at residues Q198–K201 is aspartate. Residue R220 participates in L-aspartate binding. Residues R220–E222 and Q229 contribute to the ATP site. H443 is a binding site for L-aspartate. Residue E484 coordinates ATP. An L-aspartate-binding site is contributed by R491. ATP is bound at residue G536 to R539.

It belongs to the class-II aminoacyl-tRNA synthetase family. Type 1 subfamily. Homodimer.

It localises to the cytoplasm. It carries out the reaction tRNA(Asp) + L-aspartate + ATP = L-aspartyl-tRNA(Asp) + AMP + diphosphate. Its function is as follows. Catalyzes the attachment of L-aspartate to tRNA(Asp) in a two-step reaction: L-aspartate is first activated by ATP to form Asp-AMP and then transferred to the acceptor end of tRNA(Asp). The protein is Aspartate--tRNA ligase of Lactococcus lactis subsp. lactis (strain IL1403) (Streptococcus lactis).